The following is a 149-amino-acid chain: Transcriptional repressor NrdR (149 aa).

A zinc finger spans residues 3 to 34 (CPFCNADDTKVIDSRLVADGHQVRRRRECLVC). The region spanning 49-139 (PRVIKSNGVR…VYRSFEDIRE (91 aa)) is the ATP-cone domain.

The protein belongs to the NrdR family. Requires Zn(2+) as cofactor.

Functionally, negatively regulates transcription of bacterial ribonucleotide reductase nrd genes and operons by binding to NrdR-boxes. This Tolumonas auensis (strain DSM 9187 / NBRC 110442 / TA 4) protein is Transcriptional repressor NrdR.